The primary structure comprises 247 residues: Acyl-coenzyme A thioesterase THEM5 (247 aa).

The active-site Proton donor/acceptor is the Asp-167.

This sequence belongs to the THEM4/THEM5 thioesterase family. In terms of assembly, homodimer.

It localises to the mitochondrion matrix. It carries out the reaction hexadecanoyl-CoA + H2O = hexadecanoate + CoA + H(+). The enzyme catalyses (9Z,12Z)-octadecadienoyl-CoA + H2O = (9Z,12Z)-octadecadienoate + CoA + H(+). The catalysed reaction is tetradecanoyl-CoA + H2O = tetradecanoate + CoA + H(+). It catalyses the reaction (9Z)-octadecenoyl-CoA + H2O = (9Z)-octadecenoate + CoA + H(+). It carries out the reaction (9Z)-hexadecenoyl-CoA + H2O = (9Z)-hexadecenoate + CoA + H(+). The enzyme catalyses (5Z,8Z,11Z,14Z)-eicosatetraenoyl-CoA + H2O = (5Z,8Z,11Z,14Z)-eicosatetraenoate + CoA + H(+). The catalysed reaction is octadecanoyl-CoA + H2O = octadecanoate + CoA + H(+). Functionally, has acyl-CoA thioesterase activity towards long-chain (C16 and C18) fatty acyl-CoA substrates, with a preference for linoleoyl-CoA and other unsaturated long-chain fatty acid-CoA esters. Plays an important role in mitochondrial fatty acid metabolism, and in remodeling of the mitochondrial lipid cardiolipin. Required for normal mitochondrial function. The chain is Acyl-coenzyme A thioesterase THEM5 (THEM5) from Homo sapiens (Human).